A 530-amino-acid chain; its full sequence is Alkali-sensitive linkage protein 1 (530 aa).

Residues M1–A18 form the signal peptide. N55 is a glycosylation site (N-linked (GlcNAc...) asparagine). Residues S69–V90 form a disordered region. 2 N-linked (GlcNAc...) asparagine glycosylation sites follow: N120 and N128.

It localises to the endoplasmic reticulum. The protein localises to the golgi apparatus. It is found in the secreted. Its subcellular location is the cell wall. The sequence is that of Alkali-sensitive linkage protein 1 (asl1) from Schizosaccharomyces pombe (strain 972 / ATCC 24843) (Fission yeast).